Reading from the N-terminus, the 275-residue chain is tRNA (guanine-N(1)-)-methyltransferase (275 aa).

Residues Gly-139 and 159–164 (IGDYIL) each bind S-adenosyl-L-methionine.

The protein belongs to the RNA methyltransferase TrmD family. In terms of assembly, homodimer.

It localises to the cytoplasm. The catalysed reaction is guanosine(37) in tRNA + S-adenosyl-L-methionine = N(1)-methylguanosine(37) in tRNA + S-adenosyl-L-homocysteine + H(+). Its function is as follows. Specifically methylates guanosine-37 in various tRNAs. In Lachnoclostridium phytofermentans (strain ATCC 700394 / DSM 18823 / ISDg) (Clostridium phytofermentans), this protein is tRNA (guanine-N(1)-)-methyltransferase.